The chain runs to 350 residues: DNA polymerase IV (350 aa).

In terms of domain architecture, UmuC spans 4–185 (IIHIDMDCFY…LPLGKLPGIG (182 aa)). Positions 8 and 103 each coordinate Mg(2+). Glu-104 is a catalytic residue.

This sequence belongs to the DNA polymerase type-Y family. As to quaternary structure, monomer. It depends on Mg(2+) as a cofactor.

It localises to the cytoplasm. The enzyme catalyses DNA(n) + a 2'-deoxyribonucleoside 5'-triphosphate = DNA(n+1) + diphosphate. Poorly processive, error-prone DNA polymerase involved in untargeted mutagenesis. Copies undamaged DNA at stalled replication forks, which arise in vivo from mismatched or misaligned primer ends. These misaligned primers can be extended by PolIV. Exhibits no 3'-5' exonuclease (proofreading) activity. May be involved in translesional synthesis, in conjunction with the beta clamp from PolIII. The polypeptide is DNA polymerase IV (Aeromonas hydrophila subsp. hydrophila (strain ATCC 7966 / DSM 30187 / BCRC 13018 / CCUG 14551 / JCM 1027 / KCTC 2358 / NCIMB 9240 / NCTC 8049)).